The primary structure comprises 373 residues: MSKFKSLLLLFGSLILLSGCSNVEVLNPKGPMASDSKFLIMYSIIFMLVIIAAVLILFTVFLYKYRIGNTDESGKMHHNSLLETIWFIIPVIIVIALAIPTVNSLYNYEEKPQKEDDPLVVYATSAGYKWFFSYPEEKIETVNHLTIPKDRPVVFKLQSMDMMTSFWIPQLGGQKYAMTGMTMDWTLTASEEGTFRGRNSNFNGEGFSRQTFDVNSVSQSKFEDWVKDAKKQKVLDQDTFDKQLLPTTENKNLTFSGTHLAFVDPAADPEYIFYAYDRYNFVQKDPNFNTEEERTADVLDKPDQPARKPEITNANYERHGMKAMILGNNEPYDSEFKDEESHNMDEMEKISEGAKDEKASKIEKKDHENGGGH.

Positions 1-19 (MSKFKSLLLLFGSLILLSG) are cleaved as a signal peptide. A lipid anchor (N-palmitoyl cysteine) is attached at C20. A lipid anchor (S-diacylglycerol cysteine) is attached at C20. The next 2 membrane-spanning stretches (helical) occupy residues 38–58 (FLIMYSIIFMLVIIAAVLILF) and 82–102 (LETIWFIIPVIIVIALAIPTV). Composition is skewed to basic and acidic residues over residues 292 to 320 (EERTADVLDKPDQPARKPEITNANYERHG) and 339 to 373 (EESHNMDEMEKISEGAKDEKASKIEKKDHENGGGH). Residues 292 to 373 (EERTADVLDK…KKDHENGGGH (82 aa)) form a disordered region.

The protein belongs to the cytochrome c oxidase subunit 2 family.

Its subcellular location is the cell membrane. The enzyme catalyses 2 a quinol + O2 = 2 a quinone + 2 H2O. Functionally, catalyzes quinol oxidation with the concomitant reduction of oxygen to water. Subunit II transfers the electrons from a quinol to the binuclear center of the catalytic subunit I. The polypeptide is Probable quinol oxidase subunit 2 (qoxA) (Staphylococcus saprophyticus subsp. saprophyticus (strain ATCC 15305 / DSM 20229 / NCIMB 8711 / NCTC 7292 / S-41)).